A 225-amino-acid polypeptide reads, in one-letter code: MVDNKQNVVAEFKLVLVGDGGVGKTTFVTRHQTGEFEKRYIATQGVNVSNMVLYTTKGPIRFNIWDTAGQEKLGGLREGYYIGANAAIMMFDVTSRITYKNIPKWHKDLTRICENIPIVLVGNKVDSKDRKVKARQITFHRKRSLQYYDVSAKSNYQYEKPFLWILRKLTGDPTLNLVEGIALVAPDTEHVMTEDQIKQLEMEQAEAMNLAQQGVLPDDEDDEFN.

The region spanning 8 to 172 is the Small GTPase Ran-type domain; that stretch reads VVAEFKLVLV…LWILRKLTGD (165 aa). 19–26 is a binding site for GTP; it reads DGGVGKTT. Residues 38–46 form a switch-I region; sequence KRYIATQGV. GTP contacts are provided by residues glycine 69, 123 to 126, and 151 to 153; these read NKVD and SAK. Residues 69-85 are switch-II; it reads GQEKLGGLREGYYIGAN.

This sequence belongs to the small GTPase superfamily. Ran family. In terms of assembly, monomer. Found in a nuclear export complex with RanGTP, exportin and pre-miRNA.

The protein localises to the nucleus. Functionally, GTP-binding protein involved in nucleocytoplasmic transport. Required for the import of protein into the nucleus and also for RNA export. Involved in chromatin condensation and control of cell cycle. The chain is GTP-binding nuclear protein Ran from Tetrahymena thermophila.